The primary structure comprises 601 residues: Glutathione-regulated potassium-efflux system protein KefB (601 aa).

A run of 13 helical transmembrane segments spans residues 4–24 (SDLL…VPLA), 29–49 (IGAV…GLGF), 55–75 (EILH…GLEL), 87–107 (IFGV…GLLM), 115–135 (AAVI…LQLM), 152–172 (VLLF…LLAG), 177–197 (HFDW…LIGG), 207–227 (FIAD…LVLG), 230–250 (LFMD…GVLL), 262–282 (AIDP…GMSL), 284–304 (LGVL…LVAV), 324–344 (MQFA…FSTA), and 356–376 (SLLL…MKLV). Residues 400-519 (KPQVIVVGFG…AGVTQFSRET (120 aa)) enclose the RCK N-terminal domain.

The protein belongs to the monovalent cation:proton antiporter 2 (CPA2) transporter (TC 2.A.37) family. KefB subfamily. Interacts with the regulatory subunit KefG.

It localises to the cell inner membrane. Functionally, pore-forming subunit of a potassium efflux system that confers protection against electrophiles. Catalyzes K(+)/H(+) antiport. The chain is Glutathione-regulated potassium-efflux system protein KefB from Citrobacter koseri (strain ATCC BAA-895 / CDC 4225-83 / SGSC4696).